A 139-amino-acid polypeptide reads, in one-letter code: ATP synthase epsilon chain (139 aa).

The protein belongs to the ATPase epsilon chain family. In terms of assembly, F-type ATPases have 2 components, CF(1) - the catalytic core - and CF(0) - the membrane proton channel. CF(1) has five subunits: alpha(3), beta(3), gamma(1), delta(1), epsilon(1). CF(0) has three main subunits: a, b and c.

It localises to the cell inner membrane. Functionally, produces ATP from ADP in the presence of a proton gradient across the membrane. The sequence is that of ATP synthase epsilon chain from Erwinia tasmaniensis (strain DSM 17950 / CFBP 7177 / CIP 109463 / NCPPB 4357 / Et1/99).